The following is a 1394-amino-acid chain: DNA-directed RNA polymerase subunit beta' (1394 aa).

Positions 71, 73, 86, and 89 each coordinate Zn(2+). Mg(2+)-binding residues include Asp462, Asp464, and Asp466. Positions 811, 885, 892, and 895 each coordinate Zn(2+).

This sequence belongs to the RNA polymerase beta' chain family. In terms of assembly, the RNAP catalytic core consists of 2 alpha, 1 beta, 1 beta' and 1 omega subunit. When a sigma factor is associated with the core the holoenzyme is formed, which can initiate transcription. It depends on Mg(2+) as a cofactor. Zn(2+) is required as a cofactor.

It catalyses the reaction RNA(n) + a ribonucleoside 5'-triphosphate = RNA(n+1) + diphosphate. DNA-dependent RNA polymerase catalyzes the transcription of DNA into RNA using the four ribonucleoside triphosphates as substrates. In Xanthobacter autotrophicus (strain ATCC BAA-1158 / Py2), this protein is DNA-directed RNA polymerase subunit beta'.